The primary structure comprises 93 residues: Co-chaperonin GroES (93 aa).

Belongs to the GroES chaperonin family. Heptamer of 7 subunits arranged in a ring. Interacts with the chaperonin GroEL.

The protein localises to the cytoplasm. Functionally, together with the chaperonin GroEL, plays an essential role in assisting protein folding. The GroEL-GroES system forms a nano-cage that allows encapsulation of the non-native substrate proteins and provides a physical environment optimized to promote and accelerate protein folding. GroES binds to the apical surface of the GroEL ring, thereby capping the opening of the GroEL channel. The protein is Co-chaperonin GroES of Geobacillus kaustophilus (strain HTA426).